The chain runs to 632 residues: Eukaryotic peptide chain release factor GTP-binding subunit ERF3B (632 aa).

2 disordered regions span residues 1 to 31 and 162 to 200; these read MDLG…GDGI and SEAK…SIPS. Positions 178–192 are enriched in basic and acidic residues; the sequence is ESVKEVMEEKEEVRK. Positions 205 to 429 constitute a tr-type G domain; sequence KEHVNVVFIG…YLDSLPNFNR (225 aa). The segment at 214–221 is G1; sequence GHVDAGKS. Residue 217 to 222 participates in GTP binding; it reads DAGKST. Positions 270 to 274 are G2; that stretch reads GKTVE. The G3 stretch occupies residues 291–294; that stretch reads DAPG. GTP is bound by residues 353–356 and 395–397; these read NKMD and SGL. Positions 353-356 are G4; it reads NKMD. A G5 region spans residues 395 to 397; that stretch reads SGL.

It belongs to the TRAFAC class translation factor GTPase superfamily. Classic translation factor GTPase family. ERF3 subfamily. In terms of assembly, component of the eRF1-eRF3-GTP ternary complex, composed of ETF1/ERF1 and ERF3 (GSPT1/ERF3A or GSPT2/ERF3B) and GTP. Component of the transient SURF (SMG1-UPF1-eRF1-eRF3) complex. Interacts with UPF1 and PABPC1. As to expression, highly expressed in brain. Moderately expressed in spleen and lung. Weakly expressed in heart, liver and kidney. Expression during the cell-cycle progression is constant.

Its subcellular location is the cytoplasm. It catalyses the reaction GTP + H2O = GDP + phosphate + H(+). In terms of biological role, GTPase component of the eRF1-eRF3-GTP ternary complex, a ternary complex that mediates translation termination in response to the termination codons UAA, UAG and UGA. GSPT2/ERF3B mediates ETF1/ERF1 delivery to stop codons: The eRF1-eRF3-GTP complex binds to a stop codon in the ribosomal A-site. GTP hydrolysis by GSPT2/ERF3B induces a conformational change that leads to its dissociation, permitting ETF1/ERF1 to accommodate fully in the A-site. Component of the transient SURF complex which recruits UPF1 to stalled ribosomes in the context of nonsense-mediated decay (NMD) of mRNAs containing premature stop codons. The protein is Eukaryotic peptide chain release factor GTP-binding subunit ERF3B (Gspt2) of Mus musculus (Mouse).